The chain runs to 179 residues: 3-hydroxyanthranilate 3,4-dioxygenase 2 (179 aa).

An O2-binding site is contributed by Arg-44. Fe cation is bound by residues His-48, Glu-60, and His-99. Glu-60 lines the substrate pocket. Substrate-binding residues include Arg-103 and Glu-113.

It belongs to the 3-HAO family. Requires Fe(2+) as cofactor.

The protein localises to the cytoplasm. The enzyme catalyses 3-hydroxyanthranilate + O2 = (2Z,4Z)-2-amino-3-carboxymuconate 6-semialdehyde. It participates in cofactor biosynthesis; NAD(+) biosynthesis; quinolinate from L-kynurenine: step 3/3. Its function is as follows. Catalyzes the oxidative ring opening of 3-hydroxyanthranilate to 2-amino-3-carboxymuconate semialdehyde, which spontaneously cyclizes to quinolinate. The chain is 3-hydroxyanthranilate 3,4-dioxygenase 2 (bna1-2) from Aspergillus oryzae (strain ATCC 42149 / RIB 40) (Yellow koji mold).